The following is a 730-amino-acid chain: Probable palmitoyltransferase AKR2 (730 aa).

6 ANK repeats span residues 32 to 62, 66 to 95, 100 to 129, 133 to 166, 172 to 201, and 205 to 234; these read FVVE…DINK, DELP…NVNQ, ERAT…NPTL, QGLN…NVDI, NNRT…TVAL, and RGFN…NFYE. The next 4 helical transmembrane spans lie at 283–303, 309–328, 344–364, and 376–396; these read LMIF…SLIL, IALS…KFVL, TPFF…IWVK, and AKDA…LKLV. A DHHC domain is found at 429 to 479; that stretch reads NFCVETLERKPLRSKYSLFSGALVARFNHYCPWVYNDIGLKNHKLFMFFAF. The active-site S-palmitoyl cysteine intermediate is the Cys459. 2 helical membrane-spanning segments follow: residues 473–493 and 530–550; these read LFMF…WLCL and TFFL…MLIV.

It belongs to the DHHC palmitoyltransferase family. AKR/ZDHHC17 subfamily.

Its subcellular location is the membrane. It catalyses the reaction L-cysteinyl-[protein] + hexadecanoyl-CoA = S-hexadecanoyl-L-cysteinyl-[protein] + CoA. This is Probable palmitoyltransferase AKR2 (AKR2) from Saccharomyces uvarum (strain ATCC 76518 / CBS 7001 / CLIB 283 / NBRC 10550 / MCYC 623 / NCYC 2669 / NRRL Y-11845) (Yeast).